The sequence spans 224 residues: Transcriptional regulatory protein DltR (224 aa).

The Response regulatory domain maps to 2-116 (RLLVVEDEKS…ELLARIRLRT (115 aa)). At aspartate 51 the chain carries 4-aspartylphosphate. Residues 124-222 (ANQLRLGNIR…TKGFGYSLEE (99 aa)) constitute a DNA-binding region (ompR/PhoB-type).

In terms of processing, phosphorylated by DltS.

It localises to the cytoplasm. Functionally, member of the two-component regulatory system DltS/DltR. Regulates the expression of the dlt operon. This Streptococcus agalactiae serotype III (strain NEM316) protein is Transcriptional regulatory protein DltR (dltR).